Consider the following 866-residue polypeptide: Speckle targeted PIP5K1A-regulated poly(A) polymerase (866 aa).

The segment at Phe16–Leu46 adopts a Matrin-type zinc-finger fold. The RRM domain maps to Arg56–Gln128. A disordered region spans residues Leu116–His147. Ser205 provides a ligand contact to ATP. Mg(2+) is bound by residues Asp216 and Asp218. Residues Asp216 and Asp218 each contribute to the UTP site. Disordered stretches follow at residues Leu223–Ala249 and Leu267–His321. Over residues Thr282–Gln304 the composition is skewed to polar residues. ATP is bound at residue Asn393. Residues Asn393, Arg415, Tyr433, and His550 each contribute to the UTP site. A PAP-associated domain is found at Leu492 to His550. Residues Ser599–Lys866 are KA1; binds the bulging loops of U6 snRNA but is dispensable for terminal uridylyltransferase activity. Disordered regions lie at residues Gln638–Glu687, Glu728–Val755, and Arg773–Ala792. The segment covering Lys669 to Glu687 has biased composition (basic and acidic residues). A phosphoserine mark is found at Ser686 and Ser741.

The protein belongs to the DNA polymerase type-B-like family. As to quaternary structure, associates with the cleavage and polyadenylation specificity factor (CPSF) complex. Interacts with CPSF1 and CPSF3; the interaction is direct. Interacts with PIP5K1A. The cofactor is Mg(2+). Requires Mn(2+) as cofactor. In terms of processing, phosphorylated by CK1 in the proline-rich (Pro-rich) region.

The protein localises to the nucleus. It localises to the nucleolus. The protein resides in the nucleus speckle. The enzyme catalyses RNA(n) + UTP = RNA(n)-3'-uridine ribonucleotide + diphosphate. It catalyses the reaction RNA(n) + ATP = RNA(n)-3'-adenine ribonucleotide + diphosphate. Adenylyltransferase activity is specifically phosphatidylinositol 4,5-bisphosphate (PtdIns(4,5)P2). Its function is as follows. Poly(A) polymerase that creates the 3'-poly(A) tail of specific pre-mRNAs. Localizes to nuclear speckles together with PIP5K1A and mediates polyadenylation of a select set of mRNAs, such as HMOX1. In addition to polyadenylation, it is also required for the 3'-end cleavage of pre-mRNAs: binds to the 3'UTR of targeted pre-mRNAs and promotes the recruitment and assembly of the CPSF complex on the 3'UTR of pre-mRNAs. In addition to adenylyltransferase activity, also has uridylyltransferase activity. However, the ATP ratio is higher than UTP in cells, suggesting that it functions primarily as a poly(A) polymerase. Acts as a specific terminal uridylyltransferase for U6 snRNA in vitro: responsible for a controlled elongation reaction that results in the restoration of the four 3'-terminal UMP-residues found in newly transcribed U6 snRNA. Not involved in replication-dependent histone mRNA degradation. In Rattus norvegicus (Rat), this protein is Speckle targeted PIP5K1A-regulated poly(A) polymerase (Tut1).